Consider the following 291-residue polypeptide: Ubiquinone biosynthesis protein COQ4, mitochondrial (291 aa).

The transit peptide at 1–37 directs the protein to the mitochondrion; that stretch reads MLGRRSVSLLRGLTELPVSSRAHTALRALSVPQTRRN. 4 residues coordinate Zn(2+): H169, D170, H173, and E185. Positions 271-283 are enriched in basic and acidic residues; the sequence is PLNEAKEAAERRS. Positions 271–291 are disordered; it reads PLNEAKEAAERRSKTTQNQIY.

It belongs to the COQ4 family. In terms of assembly, component of a multi-subunit COQ enzyme complex, composed of at least COQ3, COQ4, COQ5, COQ6, COQ7 and COQ9. Requires Zn(2+) as cofactor.

It is found in the mitochondrion inner membrane. The enzyme catalyses a 4-hydroxy-3-methoxy-5-(all-trans-polyprenyl)benzoate + H(+) = a 2-methoxy-6-(all-trans-polyprenyl)phenol + CO2. The protein operates within cofactor biosynthesis; ubiquinone biosynthesis. Functionally, lyase that catalyzes the C1-decarboxylation of 4-hydroxy-3-methoxy-5-(all-trans-polyprenyl)benzoic acid into 2-methoxy-6-(all-trans-polyprenyl)phenol during ubiquinone biosynthesis. The sequence is that of Ubiquinone biosynthesis protein COQ4, mitochondrial from Coprinopsis cinerea (strain Okayama-7 / 130 / ATCC MYA-4618 / FGSC 9003) (Inky cap fungus).